The sequence spans 318 residues: Porphobilinogen deaminase (318 aa).

Cysteine 241 carries the post-translational modification S-(dipyrrolylmethanemethyl)cysteine.

The protein belongs to the HMBS family. As to quaternary structure, monomer. Dipyrromethane serves as cofactor.

It carries out the reaction 4 porphobilinogen + H2O = hydroxymethylbilane + 4 NH4(+). It functions in the pathway porphyrin-containing compound metabolism; protoporphyrin-IX biosynthesis; coproporphyrinogen-III from 5-aminolevulinate: step 2/4. In terms of biological role, tetrapolymerization of the monopyrrole PBG into the hydroxymethylbilane pre-uroporphyrinogen in several discrete steps. This chain is Porphobilinogen deaminase, found in Geobacter metallireducens (strain ATCC 53774 / DSM 7210 / GS-15).